The chain runs to 151 residues: MFGMVPFRRNNNGLMRREDFFDKMFDNFFSDDFFPTTTFNGNAGFKVDIKEDDDKYTVAADLPGVKKDNIELQYENNYLTINAKRDDIVETKDDNNNFVRRERSYGELRRSFYVDNIDDSKIDASFLDGVLRITLPKKVKGKDNGRRIDIH.

In terms of domain architecture, sHSP spans Thr38–His151.

It belongs to the small heat shock protein (HSP20) family.

Functionally, probable chaperone. In Clostridium acetobutylicum (strain ATCC 824 / DSM 792 / JCM 1419 / IAM 19013 / LMG 5710 / NBRC 13948 / NRRL B-527 / VKM B-1787 / 2291 / W), this protein is 18 kDa heat shock protein (hsp18).